The sequence spans 517 residues: MTTNIHDQRILILDFGSQYTQLVARRIREIGVYCELWSWDVEESDIRDFNPDGIILSGGPESVTEENSPRAPQYVFDSGVPVFGVCYGMQTMAEQLGGKVATSTEREFGYAAVQVTGESALFKDLEATQDVWMSHGDKVVEIPSDFVKIAETETCPYAAMANEEKKYYGVQFHPEVTHTKNGMKMLENFVLNVCGCEGLWTSASIIEDAVARIKEQVGDDEVILGLSGGVDSSVVAMLAHRAIGDKLTCVFVDNGLLRLNEADQVMEMFGNKFGLNIVHVNAEQRFLDALEGESDPETKRKIIGHVFVDIFDEESKKLKNAKWLAQGTIYPDVIESAASKTGKAHVIKSHHNVGGLPDDMEMGLVEPLRELFKDEVRKIGLELGLPYNMLYRHPFPGPGLGVRVLGEIKKEYCDLLRRADAIFIEELHNADLYNKVSQAFTVFLPVRSVGVMGDGRKYDWVVSLRAVETIDFMTAHWAHLPYDFLGKVSNRIINEVNGISRVVYDISGKPPATIEWE.

Residues 9–199 enclose the Glutamine amidotransferase type-1 domain; it reads RILILDFGSQ…VLNVCGCEGL (191 aa). Cys86 (nucleophile) is an active-site residue. Residues His173 and Glu175 contribute to the active site. The region spanning 200–392 is the GMPS ATP-PPase domain; sequence WTSASIIEDA…LGLPYNMLYR (193 aa). 227-233 provides a ligand contact to ATP; sequence SGGVDSS.

As to quaternary structure, homodimer.

It catalyses the reaction XMP + L-glutamine + ATP + H2O = GMP + L-glutamate + AMP + diphosphate + 2 H(+). Its pathway is purine metabolism; GMP biosynthesis; GMP from XMP (L-Gln route): step 1/1. In terms of biological role, catalyzes the synthesis of GMP from XMP. This Aliivibrio fischeri (strain ATCC 700601 / ES114) (Vibrio fischeri) protein is GMP synthase [glutamine-hydrolyzing].